Here is a 342-residue protein sequence, read N- to C-terminus: uncharacterized protein (342 aa).

The Zn(2+) site is built by Cys41, His63, Cys94, Cys97, Cys100, Cys108, and Glu149.

This sequence belongs to the zinc-containing alcohol dehydrogenase family. Zn(2+) serves as cofactor.

This is an uncharacterized protein from Haemophilus influenzae (strain ATCC 51907 / DSM 11121 / KW20 / Rd).